The primary structure comprises 154 residues: MHCPFCRHPDSRVVDSREADEGQAIRRRRSCPECGRRFTTVETAVLAVVKRSGVTEPFSRDKVVKGVRRACQGRDVDDDALNLLAQQVEDAVRAAGSPEIPSNEVGLAILGPLRDLDEVAYLRFASVYRGFSSAEDFEREIAALRAHRDAPAES.

A zinc finger spans residues 3–34 (CPFCRHPDSRVVDSREADEGQAIRRRRSCPEC). Positions 46–136 (LAVVKRSGVT…VYRGFSSAED (91 aa)) constitute an ATP-cone domain.

Belongs to the NrdR family. The cofactor is Zn(2+).

In terms of biological role, negatively regulates transcription of bacterial ribonucleotide reductase nrd genes and operons by binding to NrdR-boxes. The polypeptide is Transcriptional repressor NrdR (Mycobacteroides abscessus (strain ATCC 19977 / DSM 44196 / CCUG 20993 / CIP 104536 / JCM 13569 / NCTC 13031 / TMC 1543 / L948) (Mycobacterium abscessus)).